The sequence spans 392 residues: Cell division protein DivIB (392 aa).

Residues 1–88 (MSEKDNNLTP…TQSSEAPIEN (88 aa)) form a disordered region. The Cytoplasmic portion of the chain corresponds to 1–131 (MSEKDNNLTP…KGSAPLLKKM (131 aa)). Residues 14–32 (KHLEYQKRKAEEAKKEKKA) are compositionally biased toward basic and acidic residues. Residues 58 to 76 (TRDEAESAELLEEGFETNN) are compositionally biased toward acidic residues. A helical membrane pass occupies residues 132–152 (WPALAVVVLVFVGSLYLISPL). In terms of domain architecture, POTRA spans 153–224 (SKISTFSVSG…NRFEAIVKEH (72 aa)). At 153 to 392 (SKISTFSVSG…TAQSTTTSSN (240 aa)) the chain is on the extracellular side. Residues 368–392 (ISAQNAKKTDASSENTAQSTTTSSN) form a disordered region.

The protein belongs to the FtsQ/DivIB family. DivIB subfamily.

Its subcellular location is the cell membrane. Its function is as follows. Cell division protein that may be involved in stabilizing or promoting the assembly of the division complex. The polypeptide is Cell division protein DivIB (Lactococcus lactis subsp. lactis (strain KF147)).